Here is a 271-residue protein sequence, read N- to C-terminus: Co-chaperone protein DjlA (271 aa).

Over 1-6 (MQYWGK) the chain is Periplasmic. A helical transmembrane segment spans residues 7 to 31 (IIGVAVALIMGGGFWGVVLGLLIGH). Residues 32 to 271 (MFDKARSRKM…ELIKQQKGFK (240 aa)) lie on the Cytoplasmic side of the membrane. A J domain is found at 205-271 (DACNVLGVKP…ELIKQQKGFK (67 aa)).

As to quaternary structure, homodimer.

The protein resides in the cell inner membrane. Functionally, regulatory DnaK co-chaperone. Direct interaction between DnaK and DjlA is needed for the induction of the wcaABCDE operon, involved in the synthesis of a colanic acid polysaccharide capsule, possibly through activation of the RcsB/RcsC phosphotransfer signaling pathway. The colanic acid capsule may help the bacterium survive conditions outside the host. The chain is Co-chaperone protein DjlA from Escherichia coli O6:H1 (strain CFT073 / ATCC 700928 / UPEC).